A 213-amino-acid polypeptide reads, in one-letter code: MDLATAAQVSEAVAEKMLQYRRDKSGWKICREGNGVSVSWRPSVEFPGNLYKGEGIVNGTPEQVWDCVKPLAGTLRAQWDENVNSFEIIESLTDTLLFSRTTTPSAVMKLISPRDFVDLILVRTYEDGTISSNAANVEHPSCPPNPAYVRGFNHPCGCFCEPLPGEPNKTSLVTFFQTDLSGYLPQSVVDSFFPRSMAGFYANLEKAVKKFFG.

One can recognise an START domain in the interval 1–213 (MDLATAAQVS…LEKAVKKFFG (213 aa)).

May be involved in the intracellular transport of sterols or other lipids. May bind cholesterol or other sterols. The sequence is that of StAR-related lipid transfer protein 5 (STARD5) from Bos taurus (Bovine).